Reading from the N-terminus, the 618-residue chain is uncharacterized protein (618 aa).

A signal peptide spans 1–29 (MSFLVLPPEVNSALMFAGAGSGPTLAAAA). Residues 598–618 (SGDNSSGGFNAGNDQSGFFDG) are disordered.

It belongs to the mycobacterial PPE family.

This is an uncharacterized protein from Mycobacterium tuberculosis (strain ATCC 25618 / H37Rv).